Consider the following 1025-residue polypeptide: Beta-galactosidase (1025 aa).

Residues Asn-103 and Asp-202 each contribute to the substrate site. Position 202 (Asp-202) interacts with Na(+). Glu-417, His-419, and Glu-462 together coordinate Mg(2+). Substrate-binding positions include Glu-462 and 538 to 541; that span reads EYAH. The active-site Proton donor is the Glu-462. Residue Glu-538 is the Nucleophile of the active site. Residue Asn-598 coordinates Mg(2+). Residues Phe-602 and Asn-605 each coordinate Na(+). Substrate-binding residues include Asn-605 and Trp-1003.

Belongs to the glycosyl hydrolase 2 family. In terms of assembly, homotetramer. It depends on Mg(2+) as a cofactor. The cofactor is Na(+).

It carries out the reaction Hydrolysis of terminal non-reducing beta-D-galactose residues in beta-D-galactosides.. The protein is Beta-galactosidase of Citrobacter koseri (strain ATCC BAA-895 / CDC 4225-83 / SGSC4696).